A 262-amino-acid polypeptide reads, in one-letter code: Acyl-[acyl-carrier-protein]--UDP-N-acetylglucosamine O-acyltransferase (262 aa).

The protein belongs to the transferase hexapeptide repeat family. LpxA subfamily. In terms of assembly, homotrimer.

It localises to the cytoplasm. It catalyses the reaction a (3R)-hydroxyacyl-[ACP] + UDP-N-acetyl-alpha-D-glucosamine = a UDP-3-O-[(3R)-3-hydroxyacyl]-N-acetyl-alpha-D-glucosamine + holo-[ACP]. Its pathway is glycolipid biosynthesis; lipid IV(A) biosynthesis; lipid IV(A) from (3R)-3-hydroxytetradecanoyl-[acyl-carrier-protein] and UDP-N-acetyl-alpha-D-glucosamine: step 1/6. In terms of biological role, involved in the biosynthesis of lipid A, a phosphorylated glycolipid that anchors the lipopolysaccharide to the outer membrane of the cell. The chain is Acyl-[acyl-carrier-protein]--UDP-N-acetylglucosamine O-acyltransferase from Mannheimia succiniciproducens (strain KCTC 0769BP / MBEL55E).